The following is a 365-amino-acid chain: Red-sensitive opsin (365 aa).

The Extracellular segment spans residues 1–51 (MASQLNEAIFAARRRNDDDDTTRSSVFTYTNSNNTRGPFEGPNYHIAPRWV). Asn-33 carries an N-linked (GlcNAc...) asparagine glycan. A helical membrane pass occupies residues 52–76 (YNLTSIWMIFVVFASVFTNGLVIVA). At 77–88 (TLKFKKLRHPLN) the chain is on the cytoplasmic side. A helical membrane pass occupies residues 89–113 (WILVNMAIADLGETVIASTISVFNQ). The Extracellular segment spans residues 114 to 128 (IFGYFILGHPMCVLE). Cys-125 and Cys-202 are joined by a disulfide. The helical transmembrane segment at 129–148 (GFTVSTCGITALWSLTVIAW) threads the bilayer. The Cytoplasmic portion of the chain corresponds to 149 to 167 (ERWFVVCKPFGNIKFDEKL). Residues 168–191 (AATGIIFSWVWSAGWCAPPMFGWS) form a helical membrane-spanning segment. At 192–217 (RFWPHGLKTSCGPDVFSGSSDPGVQS) the chain is on the extracellular side. Residues 218-245 (YMLVLMITCCIIPLAIIILCYLHVWWTI) form a helical membrane-spanning segment. Over 246–267 (RQVAQQQKESESTQKAEREVSR) the chain is Cytoplasmic. A helical transmembrane segment spans residues 268–291 (MVVVMIVAYIFCWGPYTFFACFAA). Over 292–299 (FSPGYSFH) the chain is Extracellular. Residues 300 to 324 (PLAAALPAYFAKSATIYNPIIYVFM) form a helical membrane-spanning segment. N6-(retinylidene)lysine is present on Lys-311. Over 325–365 (NRQFRNCIYQMFGKKVDDGSEVSSTSRTEVSSVSNSSVSPA) the chain is Cytoplasmic. Residues 342 to 365 (DGSEVSSTSRTEVSSVSNSSVSPA) form a disordered region. Positions 345–365 (EVSSTSRTEVSSVSNSSVSPA) are enriched in low complexity.

Belongs to the G-protein coupled receptor 1 family. Opsin subfamily. In terms of processing, phosphorylated on some or all of the serine and threonine residues present in the C-terminal region.

The protein localises to the membrane. Visual pigments are the light-absorbing molecules that mediate vision. They consist of an apoprotein, opsin, covalently linked to cis-retinal. This Xenopus laevis (African clawed frog) protein is Red-sensitive opsin (opn1lw1).